The chain runs to 336 residues: tRNA N6-adenosine threonylcarbamoyltransferase (336 aa).

2 residues coordinate Fe cation: H111 and H115. Substrate is bound by residues 134–138 (VVSGG), D167, G180, D184, and N272. D300 provides a ligand contact to Fe cation.

The protein belongs to the KAE1 / TsaD family. Fe(2+) is required as a cofactor.

The protein resides in the cytoplasm. The catalysed reaction is L-threonylcarbamoyladenylate + adenosine(37) in tRNA = N(6)-L-threonylcarbamoyladenosine(37) in tRNA + AMP + H(+). Functionally, required for the formation of a threonylcarbamoyl group on adenosine at position 37 (t(6)A37) in tRNAs that read codons beginning with adenine. Is involved in the transfer of the threonylcarbamoyl moiety of threonylcarbamoyl-AMP (TC-AMP) to the N6 group of A37, together with TsaE and TsaB. TsaD likely plays a direct catalytic role in this reaction. The polypeptide is tRNA N6-adenosine threonylcarbamoyltransferase (Caldicellulosiruptor bescii (strain ATCC BAA-1888 / DSM 6725 / KCTC 15123 / Z-1320) (Anaerocellum thermophilum)).